Consider the following 116-residue polypeptide: Immunoglobulin heavy variable 3-13 (116 aa).

The signal sequence occupies residues 1–19 (MELGLSWVFLVAILEGVQC). Positions 20–44 (EVQLVESGGGLVQPGGSLRLSCAAS) are framework-1. One can recognise an Ig-like domain in the interval 20-116 (EVQLVESGGG…GDTAVYYCAR (97 aa)). A disulfide bridge connects residues C41 and C114. The interval 45–52 (GFTFSSYD) is complementarity-determining-1. The tract at residues 53 to 69 (MHWVRQATGKGLEWVSA) is framework-2. Residues 70–76 (IGTAGDP) are complementarity-determining-2. Residues 77–114 (YYPGSVKGRFTISRENAKNSLYLQMNSLRAGDTAVYYC) form a framework-3 region. Positions 115 to 116 (AR) are complementarity-determining-3.

As to quaternary structure, immunoglobulins are composed of two identical heavy chains and two identical light chains; disulfide-linked.

The protein localises to the secreted. It is found in the cell membrane. Functionally, v region of the variable domain of immunoglobulin heavy chains that participates in the antigen recognition. Immunoglobulins, also known as antibodies, are membrane-bound or secreted glycoproteins produced by B lymphocytes. In the recognition phase of humoral immunity, the membrane-bound immunoglobulins serve as receptors which, upon binding of a specific antigen, trigger the clonal expansion and differentiation of B lymphocytes into immunoglobulins-secreting plasma cells. Secreted immunoglobulins mediate the effector phase of humoral immunity, which results in the elimination of bound antigens. The antigen binding site is formed by the variable domain of one heavy chain, together with that of its associated light chain. Thus, each immunoglobulin has two antigen binding sites with remarkable affinity for a particular antigen. The variable domains are assembled by a process called V-(D)-J rearrangement and can then be subjected to somatic hypermutations which, after exposure to antigen and selection, allow affinity maturation for a particular antigen. This Homo sapiens (Human) protein is Immunoglobulin heavy variable 3-13.